Reading from the N-terminus, the 434-residue chain is UDP-glucuronate 4-epimerase 2 (434 aa).

The next 2 helical transmembrane spans lie at 32–52 (SVAK…IFFY) and 91–111 (GVSV…SAAL). 93 to 124 (SVLVTGAAGFVGTHVSAALKRRGDGVLGLDNF) is a binding site for NAD(+). Tyrosine 243 acts as the Proton acceptor in catalysis.

It belongs to the NAD(P)-dependent epimerase/dehydratase family. In terms of assembly, homodimer. In terms of tissue distribution, in roots, leaves, siliques, flowers, pollen and stems.

Its subcellular location is the golgi apparatus. The protein resides in the golgi stack membrane. The catalysed reaction is UDP-alpha-D-glucuronate = UDP-alpha-D-galacturonate. In terms of biological role, involved in the synthesis of the negatively charged monosaccharide that forms the backbone of pectic cell wall components. This Arabidopsis thaliana (Mouse-ear cress) protein is UDP-glucuronate 4-epimerase 2 (GAE2).